A 430-amino-acid polypeptide reads, in one-letter code: Tektin-2 (430 aa).

Coiled coils occupy residues 82–160 and 273–379; these read LTDL…QAFE and EKVY…DIAC.

Belongs to the tektin family. In terms of assembly, microtubule inner protein component of sperm flagellar doublet microtubules. May interact with CCDC172. Tyrosine phosphorylated. Post-translationally, ubiquitinated, leading to its degradation. Deubiquitinated by USP16, promoting its stability.

The protein localises to the cytoplasm. Its subcellular location is the cytoskeleton. It localises to the cilium axoneme. The protein resides in the flagellum axoneme. It is found in the microtubule organizing center. In terms of biological role, microtubule inner protein (MIP) part of the dynein-decorated doublet microtubules (DMTs) in cilia and flagellar axoneme. Plays a key role in the assembly or attachment of the inner dynein arm to microtubules in sperm flagella and tracheal cilia. Forms filamentous polymers in the walls of ciliary and flagellar microtubules. In Macaca fascicularis (Crab-eating macaque), this protein is Tektin-2 (TEKT2).